The primary structure comprises 315 residues: Lipoyl synthase (315 aa).

Positions 62, 67, 73, 88, 92, 95, and 302 each coordinate [4Fe-4S] cluster. The region spanning 73–291 (CFGHGTATFM…GELAKKLGFS (219 aa)) is the Radical SAM core domain.

It belongs to the radical SAM superfamily. Lipoyl synthase family. Requires [4Fe-4S] cluster as cofactor.

The protein resides in the cytoplasm. It catalyses the reaction [[Fe-S] cluster scaffold protein carrying a second [4Fe-4S](2+) cluster] + N(6)-octanoyl-L-lysyl-[protein] + 2 oxidized [2Fe-2S]-[ferredoxin] + 2 S-adenosyl-L-methionine + 4 H(+) = [[Fe-S] cluster scaffold protein] + N(6)-[(R)-dihydrolipoyl]-L-lysyl-[protein] + 4 Fe(3+) + 2 hydrogen sulfide + 2 5'-deoxyadenosine + 2 L-methionine + 2 reduced [2Fe-2S]-[ferredoxin]. It participates in protein modification; protein lipoylation via endogenous pathway; protein N(6)-(lipoyl)lysine from octanoyl-[acyl-carrier-protein]: step 2/2. Functionally, catalyzes the radical-mediated insertion of two sulfur atoms into the C-6 and C-8 positions of the octanoyl moiety bound to the lipoyl domains of lipoate-dependent enzymes, thereby converting the octanoylated domains into lipoylated derivatives. The chain is Lipoyl synthase from Coxiella burnetii (strain CbuG_Q212) (Coxiella burnetii (strain Q212)).